The sequence spans 626 residues: MSLAFNLRVIPFSGHTIQSRRGLFPVHESPMITTKPFAAVKCSLTTSTDLMGKIKEKFNGKVHTSLPAITTHSADTPSNLCIIDTLQRLGVDRYFQSEIDSILDDTYRLWQLKKEDIFSDITTHAMAFRLLRVKGYQVSSEELAPYADQEHVNLQEIDVPTVIELYRAAQERVTEEDSTLKKLYVWTSTFLKQQLLTDAIPDKKLHEQVDYYLKNYHGILDRMGVRRSLDLYDVGHYKTLKAADGFSNLCNEDFLAFARQDFNISQAQHQKELQQLQRWYSDCRLDTLKFGRDVVRVSNFLTSAMSGDPELSDVRLAFAKHIVLVTRIDDFFDHGGSKEESYKILELVKEWKEKPAGEYGSEEVEILFTAVYNTVNELAEMAHIEQGRSVKDLLIKLWVEILSMFKIELDTWSDDTALTLDEYLSSSWVSIGCRICILISMQFLGVKLTDEMLLSEECTDLCRHVSMVDRLLNDVQTFEKERKENTGNSVSLLLAAHKDERAINEEEAITKAKDLAEYNRRKLMQIVYKTGTIFPRKCKDMFLKVCRIGCYLYSSGDEFTTPQQMMEDMKSLVYEPLTIHPPEANNVVGKKTELCQQLVKPYVCHTFCKKYTVSRPSNVMMTCYID.

The N-terminal 51 residues, 1-51 (MSLAFNLRVIPFSGHTIQSRRGLFPVHESPMITTKPFAAVKCSLTTSTDLM), are a transit peptide targeting the chloroplast. Positions 329, 333, 473, and 481 each coordinate Mg(2+). The DDXXD motif motif lies at 329-333 (DDFFD).

Belongs to the terpene synthase family. Mg(2+) serves as cofactor. In terms of tissue distribution, highly expressed in roots, and, at low levels, in stems and leaves.

The protein localises to the plastid. It localises to the chloroplast. The enzyme catalyses (+)-copalyl diphosphate = miltiradiene + diphosphate. Its pathway is secondary metabolite biosynthesis; terpenoid biosynthesis. In terms of biological role, involved in the biosynthesis of ent-kaurene diterpenoids natural products such as oridonin, miltiradiene, eriocalyxin B and nezukol, known to exhibit antitumor, anti-inflammatory and antibacterial activities. Catalyzes the conversion of (+)-copalyl diphosphate ((+)-CPP) to miltiradiene. The chain is Miltiradiene synthase KSL1, chloroplastic from Isodon rubescens (Rabdosia rubescens).